A 504-amino-acid chain; its full sequence is Cytochrome P450 6B6 (504 aa).

Heme is bound at residue Cys445.

The protein belongs to the cytochrome P450 family. Requires heme as cofactor.

It is found in the endoplasmic reticulum membrane. It localises to the microsome membrane. The enzyme catalyses an organic molecule + reduced [NADPH--hemoprotein reductase] + O2 = an alcohol + oxidized [NADPH--hemoprotein reductase] + H2O + H(+). The chain is Cytochrome P450 6B6 (CYP6B6) from Helicoverpa armigera (Cotton bollworm).